The sequence spans 212 residues: Thymidylate kinase (212 aa).

Residue G11 to S18 coordinates ATP.

This sequence belongs to the thymidylate kinase family.

The enzyme catalyses dTMP + ATP = dTDP + ADP. Functionally, phosphorylation of dTMP to form dTDP in both de novo and salvage pathways of dTTP synthesis. The sequence is that of Thymidylate kinase from Streptococcus sanguinis (strain SK36).